The chain runs to 185 residues: Large ribosomal subunit protein uL5m (185 aa).

Belongs to the universal ribosomal protein uL5 family. Component of the mitochondrial ribosome large subunit.

It is found in the mitochondrion. The sequence is that of Large ribosomal subunit protein uL5m (RPL5) from Arabidopsis thaliana (Mouse-ear cress).